A 59-amino-acid polypeptide reads, in one-letter code: Zinc finger protein HVO_2753 (59 aa).

4 consecutive short sequence motifs (c(P)XCG motif) follow at residues 12–16 (CVSCG), 29–33 (CPDCG), 39–43 (CSKCR), and 51–55 (CPDCG). Cys-29 and Cys-32 together coordinate Zn(2+). Residues Cys-51 and Cys-54 each contribute to the Zn(2+) site.

As to quaternary structure, monomer in solution.

In terms of biological role, zinc-binding protein that binds only one zinc ion. Is required for swarming and biofilm formation. This chain is Zinc finger protein HVO_2753, found in Haloferax volcanii (strain ATCC 29605 / DSM 3757 / JCM 8879 / NBRC 14742 / NCIMB 2012 / VKM B-1768 / DS2) (Halobacterium volcanii).